Reading from the N-terminus, the 130-residue chain is Small ribosomal subunit protein uS8 (130 aa).

The protein belongs to the universal ribosomal protein uS8 family.

It is found in the cytoplasm. The sequence is that of Small ribosomal subunit protein uS8 (RPS15A) from Brassica napus (Rape).